Reading from the N-terminus, the 890-residue chain is DNA mismatch repair protein MutS (890 aa).

Position 607–614 (607–614) interacts with ATP; the sequence is GPNMSGKS.

Belongs to the DNA mismatch repair MutS family.

In terms of biological role, this protein is involved in the repair of mismatches in DNA. It is possible that it carries out the mismatch recognition step. This protein has a weak ATPase activity. In Bacillus thuringiensis (strain Al Hakam), this protein is DNA mismatch repair protein MutS.